A 239-amino-acid polypeptide reads, in one-letter code: MRIERVDDTTVKLFITYSDIEARGFSREDLWTNRKRGEEFFWSMMDEINEEEDFVVEGPLWIQVHAFEKGVEVTISKSKNEDMMNMSDDDATDQFDEQVQELLAQTLEGEDQLEELFEQRTKEKEAQGSKRQKSSARKNTRTIIVKFNDLEDVINYAYHSNPITTEFEDLLYMVDGTYYYAVHFDSHVDQEVINDSYSQLLEFAYPTDRTEVYLNDYAKIIMSHNVTAQVRRYFPETTE.

A compositionally biased stretch (basic and acidic residues) spans 118-128; that stretch reads EQRTKEKEAQG. The segment at 118–137 is disordered; that stretch reads EQRTKEKEAQGSKRQKSSAR.

Belongs to the MecA family. As to quaternary structure, homodimer.

Functionally, enables the recognition and targeting of unfolded and aggregated proteins to the ClpC protease or to other proteins involved in proteolysis. This chain is Adapter protein MecA, found in Staphylococcus aureus (strain Mu3 / ATCC 700698).